The primary structure comprises 99 residues: Putative pterin-4-alpha-carbinolamine dehydratase (99 aa).

It belongs to the pterin-4-alpha-carbinolamine dehydratase family.

It carries out the reaction (4aS,6R)-4a-hydroxy-L-erythro-5,6,7,8-tetrahydrobiopterin = (6R)-L-erythro-6,7-dihydrobiopterin + H2O. The protein is Putative pterin-4-alpha-carbinolamine dehydratase of Aquifex aeolicus (strain VF5).